The sequence spans 666 residues: ATP-dependent zinc metalloprotease FtsH (666 aa).

The tract at residues 1–23 (MSREVTSGLPQDKPTGSAPPPPP) is disordered. Topologically, residues 1–27 (MSREVTSGLPQDKPTGSAPPPPPPWRR) are cytoplasmic. A helical transmembrane segment spans residues 28–48 (WLLPIGLLVSLVLLFTFPMRP). Residues 49 to 125 (SSGKTLTYSE…RPPGPSLASQ (77 aa)) are Extracellular-facing. The chain crosses the membrane as a helical span at residues 126–146 (VLAGVLSFLPFLLLLGLFAYS). Topologically, residues 147-666 (GRRAGAGFLA…RTAASSDDLL (520 aa)) are cytoplasmic. Position 219-226 (219-226 (GPPGTGKT)) interacts with ATP. Position 442 (histidine 442) interacts with Zn(2+). Glutamate 443 is an active-site residue. Histidine 446 and aspartate 518 together coordinate Zn(2+). The tract at residues 626-666 (PEEHREAAARHVRRPGIAAATGASMAGGSEPRTAASSDDLL) is disordered. A compositionally biased stretch (low complexity) spans 641–653 (GIAAATGASMAGG).

It in the central section; belongs to the AAA ATPase family. The protein in the C-terminal section; belongs to the peptidase M41 family. Homohexamer. The cofactor is Zn(2+).

Its subcellular location is the cell membrane. Functionally, acts as a processive, ATP-dependent zinc metallopeptidase for both cytoplasmic and membrane proteins. Plays a role in the quality control of integral membrane proteins. This Acidothermus cellulolyticus (strain ATCC 43068 / DSM 8971 / 11B) protein is ATP-dependent zinc metalloprotease FtsH.